The following is a 621-amino-acid chain: Type 2 DNA topoisomerase 6 subunit B (621 aa).

Residues asparagine 48, aspartate 80, 101 to 102, 111 to 118, and lysine 435 each bind ATP; these read SR and GQQGIGIS.

This sequence belongs to the TOP6B family. Homodimer. Heterotetramer of two Top6A and two Top6B chains.

The enzyme catalyses ATP-dependent breakage, passage and rejoining of double-stranded DNA.. Relaxes both positive and negative superturns and exhibits a strong decatenase activity. The sequence is that of Type 2 DNA topoisomerase 6 subunit B from Methanosarcina barkeri (strain Fusaro / DSM 804).